Consider the following 361-residue polypeptide: Phosphoserine aminotransferase (361 aa).

Residue Arg43 coordinates L-glutamate. Pyridoxal 5'-phosphate contacts are provided by residues 77–78, Trp103, Thr153, Asp173, and Gln196; that span reads AS. Lys197 bears the N6-(pyridoxal phosphate)lysine mark. Residue 238–239 participates in pyridoxal 5'-phosphate binding; it reads NT.

Belongs to the class-V pyridoxal-phosphate-dependent aminotransferase family. SerC subfamily. In terms of assembly, homodimer. Pyridoxal 5'-phosphate is required as a cofactor.

It is found in the cytoplasm. The enzyme catalyses O-phospho-L-serine + 2-oxoglutarate = 3-phosphooxypyruvate + L-glutamate. It carries out the reaction 4-(phosphooxy)-L-threonine + 2-oxoglutarate = (R)-3-hydroxy-2-oxo-4-phosphooxybutanoate + L-glutamate. It participates in amino-acid biosynthesis; L-serine biosynthesis; L-serine from 3-phospho-D-glycerate: step 2/3. Its pathway is cofactor biosynthesis; pyridoxine 5'-phosphate biosynthesis; pyridoxine 5'-phosphate from D-erythrose 4-phosphate: step 3/5. In terms of biological role, catalyzes the reversible conversion of 3-phosphohydroxypyruvate to phosphoserine and of 3-hydroxy-2-oxo-4-phosphonooxybutanoate to phosphohydroxythreonine. This Pseudomonas putida (strain ATCC 47054 / DSM 6125 / CFBP 8728 / NCIMB 11950 / KT2440) protein is Phosphoserine aminotransferase.